Consider the following 580-residue polypeptide: Micronemal protein 4 (580 aa).

The signal sequence occupies residues Met-1–Ala-25. 6 consecutive Apple domains span residues Cys-68–Cys-137, Cys-141–Cys-214, Cys-232–Cys-301, Cys-305–Gly-375, Cys-419–Cys-488, and Cys-492–Cys-565. 15 cysteine pairs are disulfide-bonded: Cys-68–Cys-137, Cys-93–Cys-115, Cys-97–Cys-103, Cys-141–Cys-214, Cys-166–Cys-188, Cys-170–Cys-176, Cys-232–Cys-301, Cys-257–Cys-279, Cys-261–Cys-267, Cys-305–Cys-380, Cys-332–Cys-354, Cys-336–Cys-342, Cys-419–Cys-488, Cys-444–Cys-466, and Cys-448–Cys-454.

In terms of assembly, monomer. Part of the MIC6-MIC1-MIC4 complex. Interacts (via the second apple domain) directly with MIC1 (via the beta-finger region). Interacts with murine TLR2; the interaction promotes activation of bone marrow-derived dendritic cells and macrophages in the host. Interacts with murine TLR4; the interaction promotes activation of bone marrow-derived dendritic cells and macrophages in the host. Post-translationally, proteolytically cleaved at the N- and C-terminus after release from the microneme.

The protein localises to the cytoplasmic vesicle. It localises to the secretory vesicle. It is found in the microneme. Its subcellular location is the host early endosome. Lacto-N-biose inhibits binding to asialofetuin, a host glycoprotein. Functionally, soluble adhesin with carbohydrate-binding activity. Binds to galactose-terminating oligosaccharides. Required for attachment of the parasite to the host cell prior to invasion. Triggers the activation of murine bone marrow-derived dendritic cells and macrophages and production of pro-inflammatory cytokines, such as IL12 (IL12B/IL12A), in host TLR2/TLR4-dependent manner. Triggers the production of anti-inflammatory cytokine IL10 in murine bone marrow-derived macrophages in host TLR4-dependent manner. Induces transient endotoxin tolerance in murine bone marrow-derived macrophages, manifested by reduced TNF-alpha (TNF) production in response to challenge with lipopolysaccharides (LPS). The sequence is that of Micronemal protein 4 from Toxoplasma gondii.